A 211-amino-acid polypeptide reads, in one-letter code: FMN-dependent NADH:quinone oxidoreductase 3 (211 aa).

102–105 (MWNF) is an FMN binding site.

It belongs to the azoreductase type 1 family. In terms of assembly, homodimer. FMN serves as cofactor.

The catalysed reaction is 2 a quinone + NADH + H(+) = 2 a 1,4-benzosemiquinone + NAD(+). It catalyses the reaction N,N-dimethyl-1,4-phenylenediamine + anthranilate + 2 NAD(+) = 2-(4-dimethylaminophenyl)diazenylbenzoate + 2 NADH + 2 H(+). Functionally, quinone reductase that provides resistance to thiol-specific stress caused by electrophilic quinones. Also exhibits azoreductase activity. Catalyzes the reductive cleavage of the azo bond in aromatic azo compounds to the corresponding amines. In Bacillus anthracis, this protein is FMN-dependent NADH:quinone oxidoreductase 3.